Here is a 341-residue protein sequence, read N- to C-terminus: S-adenosylmethionine:tRNA ribosyltransferase-isomerase (341 aa).

The protein belongs to the QueA family. In terms of assembly, monomer.

The protein localises to the cytoplasm. The enzyme catalyses 7-aminomethyl-7-carbaguanosine(34) in tRNA + S-adenosyl-L-methionine = epoxyqueuosine(34) in tRNA + adenine + L-methionine + 2 H(+). It functions in the pathway tRNA modification; tRNA-queuosine biosynthesis. Its function is as follows. Transfers and isomerizes the ribose moiety from AdoMet to the 7-aminomethyl group of 7-deazaguanine (preQ1-tRNA) to give epoxyqueuosine (oQ-tRNA). This Clostridium botulinum (strain Loch Maree / Type A3) protein is S-adenosylmethionine:tRNA ribosyltransferase-isomerase.